A 415-amino-acid chain; its full sequence is Serine hydroxymethyltransferase (415 aa).

Residues leucine 121 and 125–127 contribute to the (6S)-5,6,7,8-tetrahydrofolate site; that span reads GHL. Lysine 230 is subject to N6-(pyridoxal phosphate)lysine. Residue 355 to 357 coordinates (6S)-5,6,7,8-tetrahydrofolate; it reads SPF.

It belongs to the SHMT family. In terms of assembly, homodimer. It depends on pyridoxal 5'-phosphate as a cofactor.

The protein localises to the cytoplasm. The enzyme catalyses (6R)-5,10-methylene-5,6,7,8-tetrahydrofolate + glycine + H2O = (6S)-5,6,7,8-tetrahydrofolate + L-serine. Its pathway is one-carbon metabolism; tetrahydrofolate interconversion. It participates in amino-acid biosynthesis; glycine biosynthesis; glycine from L-serine: step 1/1. In terms of biological role, catalyzes the reversible interconversion of serine and glycine with tetrahydrofolate (THF) serving as the one-carbon carrier. This reaction serves as the major source of one-carbon groups required for the biosynthesis of purines, thymidylate, methionine, and other important biomolecules. Also exhibits THF-independent aldolase activity toward beta-hydroxyamino acids, producing glycine and aldehydes, via a retro-aldol mechanism. This chain is Serine hydroxymethyltransferase, found in Lactococcus lactis subsp. cremoris (strain SK11).